Consider the following 102-residue polypeptide: UPF0213 protein XAC3202 (102 aa).

Positions 5–80 (KPWHLYLLLC…KRLPRARKLA (76 aa)) constitute a GIY-YIG domain.

The protein belongs to the UPF0213 family.

This is UPF0213 protein XAC3202 from Xanthomonas axonopodis pv. citri (strain 306).